The primary structure comprises 36 residues: Photosystem I reaction center subunit VIII (36 aa).

Residues 6 to 28 form a helical membrane-spanning segment; it reads LPSIFVPLVGLLFPAIAMVSLFF.

This sequence belongs to the PsaI family.

It is found in the plastid. It localises to the chloroplast thylakoid membrane. In terms of biological role, may help in the organization of the PsaL subunit. The protein is Photosystem I reaction center subunit VIII of Nymphaea alba (White water-lily).